The chain runs to 547 residues: Chaperonin GroEL (547 aa).

ATP-binding positions include 30 to 33 (TLGP), Lys-51, 87 to 91 (DGTTT), Gly-415, and Asp-495.

This sequence belongs to the chaperonin (HSP60) family. In terms of assembly, forms a cylinder of 14 subunits composed of two heptameric rings stacked back-to-back. Interacts with the co-chaperonin GroES.

The protein localises to the cytoplasm. It carries out the reaction ATP + H2O + a folded polypeptide = ADP + phosphate + an unfolded polypeptide.. In terms of biological role, together with its co-chaperonin GroES, plays an essential role in assisting protein folding. The GroEL-GroES system forms a nano-cage that allows encapsulation of the non-native substrate proteins and provides a physical environment optimized to promote and accelerate protein folding. This is Chaperonin GroEL from Aggregatibacter actinomycetemcomitans (Actinobacillus actinomycetemcomitans).